The following is a 341-amino-acid chain: S-adenosylmethionine:tRNA ribosyltransferase-isomerase (341 aa).

The protein belongs to the QueA family. Monomer.

It is found in the cytoplasm. The enzyme catalyses 7-aminomethyl-7-carbaguanosine(34) in tRNA + S-adenosyl-L-methionine = epoxyqueuosine(34) in tRNA + adenine + L-methionine + 2 H(+). It participates in tRNA modification; tRNA-queuosine biosynthesis. Its function is as follows. Transfers and isomerizes the ribose moiety from AdoMet to the 7-aminomethyl group of 7-deazaguanine (preQ1-tRNA) to give epoxyqueuosine (oQ-tRNA). The chain is S-adenosylmethionine:tRNA ribosyltransferase-isomerase from Clostridium beijerinckii (strain ATCC 51743 / NCIMB 8052) (Clostridium acetobutylicum).